A 263-amino-acid polypeptide reads, in one-letter code: Proteasome subunit beta type-5 (263 aa).

The propeptide at 1 to 59 is removed in mature form; sequence MALASVLERPLSVNRRGFFGLGGRADLLDLGPGSPSDGLSLAAPSWGVPEEPRIEILHG. The active-site Nucleophile is the Thr60. Ala108 is a bortezomib binding site.

Belongs to the peptidase T1B family. In terms of assembly, the 26S proteasome consists of a 20S proteasome core and two 19S regulatory subunits. The 20S proteasome core is a barrel-shaped complex made of 28 subunits that are arranged in four stacked rings. The two outer rings are each formed by seven alpha subunits, and the two inner rings are formed by seven beta subunits. The proteolytic activity is exerted by three beta-subunits PSMB5, PSMB6 and PSMB7. Directly interacts with POMP. Interacts with ABCB1 and TAP1.

It localises to the cytoplasm. Its subcellular location is the nucleus. It carries out the reaction Cleavage of peptide bonds with very broad specificity.. Component of the 20S core proteasome complex involved in the proteolytic degradation of most intracellular proteins. This complex plays numerous essential roles within the cell by associating with different regulatory particles. Associated with two 19S regulatory particles, forms the 26S proteasome and thus participates in the ATP-dependent degradation of ubiquitinated proteins. The 26S proteasome plays a key role in the maintenance of protein homeostasis by removing misfolded or damaged proteins that could impair cellular functions, and by removing proteins whose functions are no longer required. Associated with the PA200 or PA28, the 20S proteasome mediates ubiquitin-independent protein degradation. This type of proteolysis is required in several pathways including spermatogenesis (20S-PA200 complex) or generation of a subset of MHC class I-presented antigenic peptides (20S-PA28 complex). Within the 20S core complex, PSMB5 displays a chymotrypsin-like activity. The sequence is that of Proteasome subunit beta type-5 from Bos taurus (Bovine).